The primary structure comprises 276 residues: Large ribosomal subunit protein uL2 (276 aa).

Basic and acidic residues predominate over residues 28-38 (RPEKSLTEKLS). 2 disordered regions span residues 28–57 (RPEK…QGGG) and 219–276 (TVRG…RRKK).

This sequence belongs to the universal ribosomal protein uL2 family. As to quaternary structure, part of the 50S ribosomal subunit. Forms a bridge to the 30S subunit in the 70S ribosome.

Functionally, one of the primary rRNA binding proteins. Required for association of the 30S and 50S subunits to form the 70S ribosome, for tRNA binding and peptide bond formation. It has been suggested to have peptidyltransferase activity; this is somewhat controversial. Makes several contacts with the 16S rRNA in the 70S ribosome. The polypeptide is Large ribosomal subunit protein uL2 (Exiguobacterium sp. (strain ATCC BAA-1283 / AT1b)).